The chain runs to 540 residues: Chaperonin GroEL (540 aa).

ATP contacts are provided by residues T29–P32, D86–T90, G413, N476–A478, and D492.

Belongs to the chaperonin (HSP60) family. Forms a cylinder of 14 subunits composed of two heptameric rings stacked back-to-back. Interacts with the co-chaperonin GroES.

The protein resides in the cytoplasm. It catalyses the reaction ATP + H2O + a folded polypeptide = ADP + phosphate + an unfolded polypeptide.. Functionally, together with its co-chaperonin GroES, plays an essential role in assisting protein folding. The GroEL-GroES system forms a nano-cage that allows encapsulation of the non-native substrate proteins and provides a physical environment optimized to promote and accelerate protein folding. This chain is Chaperonin GroEL, found in Streptococcus agalactiae serotype V (strain ATCC BAA-611 / 2603 V/R).